A 312-amino-acid polypeptide reads, in one-letter code: Ribosomal protein L11 methyltransferase (312 aa).

Residues T162, G183, D205, and N248 each contribute to the S-adenosyl-L-methionine site.

It belongs to the methyltransferase superfamily. PrmA family.

The protein resides in the cytoplasm. The catalysed reaction is L-lysyl-[protein] + 3 S-adenosyl-L-methionine = N(6),N(6),N(6)-trimethyl-L-lysyl-[protein] + 3 S-adenosyl-L-homocysteine + 3 H(+). Functionally, methylates ribosomal protein L11. The polypeptide is Ribosomal protein L11 methyltransferase (Bacillus cereus (strain ATCC 10987 / NRS 248)).